We begin with the raw amino-acid sequence, 436 residues long: UPF0597 protein YhaM (436 aa).

The protein belongs to the UPF0597 family.

This chain is UPF0597 protein YhaM, found in Shigella flexneri serotype 5b (strain 8401).